The following is a 296-amino-acid chain: 4-hydroxybenzoate octaprenyltransferase (296 aa).

The next 9 membrane-spanning stretches (helical) occupy residues 29–49 (IGIY…AEGV), 55–75 (LFIF…INDY), 102–122 (ALVL…FTNA), 124–141 (TIWL…YPFM), 146–166 (FYPQ…AFTA), 169–189 (GSLP…TVAY), 216–236 (ADRL…LLAG), 239–259 (FELG…FVWE), and 271–291 (CFNA…GIVL).

Belongs to the UbiA prenyltransferase family. The cofactor is Mg(2+).

It localises to the cell inner membrane. It catalyses the reaction all-trans-octaprenyl diphosphate + 4-hydroxybenzoate = 4-hydroxy-3-(all-trans-octaprenyl)benzoate + diphosphate. Its pathway is cofactor biosynthesis; ubiquinone biosynthesis. In terms of biological role, catalyzes the prenylation of para-hydroxybenzoate (PHB) with an all-trans polyprenyl group. Mediates the second step in the final reaction sequence of ubiquinone-8 (UQ-8) biosynthesis, which is the condensation of the polyisoprenoid side chain with PHB, generating the first membrane-bound Q intermediate 3-octaprenyl-4-hydroxybenzoate. In Ectopseudomonas mendocina (strain ymp) (Pseudomonas mendocina), this protein is 4-hydroxybenzoate octaprenyltransferase.